Consider the following 58-residue polypeptide: Potassium channel toxin alpha-KTx 26.2 (58 aa).

The N-terminal stretch at 1–19 (MKTIFVVILVLFVLSAMLA) is a signal peptide. 3 cysteine pairs are disulfide-bonded: C31-C49, C35-C54, and C39-C56.

It belongs to the short scorpion toxin superfamily. Potassium channel inhibitor family. Alpha-KTx 26 subfamily. As to expression, expressed by the venom gland.

It is found in the secreted. Its function is as follows. Inhibits voltage-gated potassium channels. The chain is Potassium channel toxin alpha-KTx 26.2 from Lychas mucronatus (Chinese swimming scorpion).